The primary structure comprises 160 residues: Cytochrome b6-f complex subunit 4 (160 aa).

3 helical membrane passes run 36-56 (LLYM…GLAV), 95-115 (LLGV…PFIE), and 131-151 (TVFL…TLPI).

It belongs to the cytochrome b family. PetD subfamily. The 4 large subunits of the cytochrome b6-f complex are cytochrome b6, subunit IV (17 kDa polypeptide, petD), cytochrome f and the Rieske protein, while the 4 small subunits are petG, petL, petM and petN. The complex functions as a dimer.

The protein localises to the plastid. It localises to the chloroplast thylakoid membrane. Component of the cytochrome b6-f complex, which mediates electron transfer between photosystem II (PSII) and photosystem I (PSI), cyclic electron flow around PSI, and state transitions. This Nephroselmis olivacea (Green alga) protein is Cytochrome b6-f complex subunit 4.